Reading from the N-terminus, the 214-residue chain is GTP-binding protein ypt3 (214 aa).

GTP is bound at residue 17–24 (GDSGVGKS). The short motif at 39-47 (SKSTIGVEF) is the Effector region element. T42 is subject to Phosphothreonine. Residues 65–69 (DTAGQ) and 123–126 (NKTD) contribute to the GTP site. 2 S-geranylgeranyl cysteine lipidation sites follow: C213 and C214.

This sequence belongs to the small GTPase superfamily. Rab family.

It localises to the cell membrane. The protein resides in the endosome membrane. Its subcellular location is the golgi apparatus membrane. The protein localises to the cytoplasm. It is found in the nucleus. In terms of biological role, has a role in retrograde traffricking of proteins from the endosome to the Golgi. Involved in the secretory pathway where it has a role in acid phosphatase secretion. In Schizosaccharomyces pombe (strain 972 / ATCC 24843) (Fission yeast), this protein is GTP-binding protein ypt3 (ypt3).